An 84-amino-acid polypeptide reads, in one-letter code: ATP synthase subunit c (84 aa).

Transmembrane regions (helical) follow at residues 10 to 30 (IAVG…FALL) and 53 to 73 (FIIA…ALLF).

The protein belongs to the ATPase C chain family. In terms of assembly, F-type ATPases have 2 components, F(1) - the catalytic core - and F(0) - the membrane proton channel. F(1) has five subunits: alpha(3), beta(3), gamma(1), delta(1), epsilon(1). F(0) has three main subunits: a(1), b(2) and c(10-14). The alpha and beta chains form an alternating ring which encloses part of the gamma chain. F(1) is attached to F(0) by a central stalk formed by the gamma and epsilon chains, while a peripheral stalk is formed by the delta and b chains.

The protein localises to the cell inner membrane. F(1)F(0) ATP synthase produces ATP from ADP in the presence of a proton or sodium gradient. F-type ATPases consist of two structural domains, F(1) containing the extramembraneous catalytic core and F(0) containing the membrane proton channel, linked together by a central stalk and a peripheral stalk. During catalysis, ATP synthesis in the catalytic domain of F(1) is coupled via a rotary mechanism of the central stalk subunits to proton translocation. In terms of biological role, key component of the F(0) channel; it plays a direct role in translocation across the membrane. A homomeric c-ring of between 10-14 subunits forms the central stalk rotor element with the F(1) delta and epsilon subunits. In Vibrio alginolyticus, this protein is ATP synthase subunit c.